A 690-amino-acid chain; its full sequence is MAKKKSEDHSGGDANDSDYNEEPNFEDPPNFVDNISDDDLLGDMLAQRPSEADGVESVVVVDNIPKVEPVRLEKLKSVINKLFSHCGDIVNVVYPVDEEGKTKGYAFMEYKHAGQAEEAVKKLNNHRLDKNHTFAVNLFTDFQKYENIPEKWEPPTVQSFKVQNDLYNFINDPDAYDQYCVAAETSQNCVQVGFWQNVLPEPNELETRERFTDTFVKWSPLGTYVVTFHKPGVAIWGGSSFQKIQKFPHTGTQFVEFSPCENYLVTYGPTPTGQKIIIWDIRTGAEKRSFVADGMSVLSMFRWSHDDKYVARMGDNSIHIYETPSFYLLDLKSIKIPGIRGFSWSPTDNVIAYWVEEQNQIPARVTLMEIPKKRETRNKNLFHVADCKLHWQKSGDYLCVKVDRYSKLKKDKKELDVKFLGMFYNFEIFHMREKEVPVDSVEIRELILAFAWEPIGNKFSIIHGEPNSANVSFYEVNKGVKPSLVKRLEKKSCTHLFWSPRGQFIVMANLTMGTFEFVDSTNDYIISASPDHFRASEVEWDPTGRYVVTGVSSWKVKEDTGFNMYTFQGRIIKRTILKNFVQFLWRPRPPTLLSEDKQKDIKKNLKKYYPAFEQKDRLRLTRASKELLEKRSQLRETFMEYRNKRIGEWKEQKSRRVMLRGHVDTDNLETEEVDEEVVEFLVKEEITLLE.

Residues 1-11 are compositionally biased toward basic and acidic residues; that stretch reads MAKKKSEDHSG. Residues 1-37 are disordered; the sequence is MAKKKSEDHSGGDANDSDYNEEPNFEDPPNFVDNISD. A compositionally biased stretch (acidic residues) spans 15–25; that stretch reads NDSDYNEEPNF. Positions 57–141 constitute an RRM domain; that stretch reads SVVVVDNIPK…HTFAVNLFTD (85 aa). WD repeat units follow at residues 207–246, 247–289, 293–331, 334–369, 442–484, and 530–575; these read TRER…KIQK, FPHT…EKRS, DGMS…LLDL, IKIP…TLME, EIRE…KPSL, and PDHF…IKRT. Residues 614–645 adopt a coiled-coil conformation; the sequence is QKDRLRLTRASKELLEKRSQLRETFMEYRNKR.

It belongs to the eIF-3 subunit B family. In terms of assembly, component of the eukaryotic translation initiation factor 3 (eIF-3) complex. The eIF-3 complex interacts with pix. Interacts with mxt.

It is found in the cytoplasm. Its function is as follows. RNA-binding component of the eukaryotic translation initiation factor 3 (eIF-3) complex, which is involved in protein synthesis of a specialized repertoire of mRNAs and, together with other initiation factors, stimulates binding of mRNA and methionyl-tRNAi to the 40S ribosome. The eIF-3 complex specifically targets and initiates translation of a subset of mRNAs involved in cell proliferation. This is Eukaryotic translation initiation factor 3 subunit B from Drosophila pseudoobscura pseudoobscura (Fruit fly).